A 206-amino-acid polypeptide reads, in one-letter code: MTTFETPRETVFIESVDSIPQSKKTHVFAICVTVDNKPIVAARRSSFVFQEITMNMNPPIVVTISKHLTNYMYNNEIKEIKRKLQKGSAPIYKTSFEELILLGGKLNKSETIDDCIRREIKEETDSKLTIKSIGTTCVKITITDKLFNRKYVNYCKLCYIDELMEEVISFVIYNVEIRKLKSLLDCDNNDKFNYLRFIYNTLLYSK.

Residues 23-206 (KKTHVFAICV…FIYNTLLYSK (184 aa)) form the Nudix hydrolase domain. A Nudix box motif is present at residues 104–125 (GKLNKSETIDDCIRREIKEETD). Residue E110 participates in Mg(2+) binding. E119 (nucleophile) is an active-site residue. E123 and D144 together coordinate Mg(2+).

Belongs to the Nudix hydrolase family. Mg(2+) serves as cofactor. The cofactor is Mn(2+).

Functionally, decapping enzyme required for the removal of the 5'-end m7GpppN cap tethered to viral and host mRNAs to allow their decay in cells. May therefore accelerate viral and cellular mRNA turnover to eliminate competing host mRNAs and allow stage-specific synthesis of viral proteins. Acceleration of the turnover of cellular transcripts may even promote the shutoff of host protein synthesis. Does not cleave unmethylated RNAs or RNAs shorter than 24 nucleotides. This Oryctolagus cuniculus (Rabbit) protein is mRNA-decapping protein D9.